The primary structure comprises 118 residues: MSASQLETTEPADIVGQLQRAASAEDFFELLDVDFDPKVVNVARLHILKRMGQYLASEDLDGLPSAETKARCKTVLERAYADFVESSPLDQRVFKVLKDAVAPKSPRRPAFVSLDNLK.

The protein belongs to the NifW family. Homotrimer; associates with NifD.

Functionally, may protect the nitrogenase Fe-Mo protein from oxidative damage. This Rhodopseudomonas palustris (strain BisB5) protein is Nitrogenase-stabilizing/protective protein NifW.